The following is a 339-amino-acid chain: ATPase GET3 (339 aa).

K34–T41 is a binding site for ATP. D63 is a catalytic residue. Positions 243 and 270 each coordinate ATP. C281 and C284 together coordinate Zn(2+).

This sequence belongs to the arsA ATPase family. As to quaternary structure, homodimer.

It is found in the cytoplasm. Its subcellular location is the endoplasmic reticulum. In terms of biological role, ATPase required for the post-translational delivery of tail-anchored (TA) proteins to the endoplasmic reticulum. Recognizes and selectively binds the transmembrane domain of TA proteins in the cytosol. This complex then targets to the endoplasmic reticulum by membrane-bound receptors, where the tail-anchored protein is released for insertion. This process is regulated by ATP binding and hydrolysis. ATP binding drives the homodimer towards the closed dimer state, facilitating recognition of newly synthesized TA membrane proteins. ATP hydrolysis is required for insertion. Subsequently, the homodimer reverts towards the open dimer state, lowering its affinity for the membrane-bound receptor, and returning it to the cytosol to initiate a new round of targeting. This chain is ATPase GET3, found in Coccidioides immitis (strain RS) (Valley fever fungus).